The chain runs to 337 residues: DNA-directed RNA polymerase subunit alpha (337 aa).

Residues 1–233 are alpha N-terminal domain (alpha-NTD); it reads MVREKVRVST…DLFIPFLHAE (233 aa). The tract at residues 267 to 337 is alpha C-terminal domain (alpha-CTD); sequence IALKSIFIDQ…KAFHNPFTEE (71 aa).

Belongs to the RNA polymerase alpha chain family. In plastids the minimal PEP RNA polymerase catalytic core is composed of four subunits: alpha, beta, beta', and beta''. When a (nuclear-encoded) sigma factor is associated with the core the holoenzyme is formed, which can initiate transcription.

It localises to the plastid. Its subcellular location is the chloroplast. It carries out the reaction RNA(n) + a ribonucleoside 5'-triphosphate = RNA(n+1) + diphosphate. DNA-dependent RNA polymerase catalyzes the transcription of DNA into RNA using the four ribonucleoside triphosphates as substrates. The polypeptide is DNA-directed RNA polymerase subunit alpha (Eucalyptus globulus subsp. globulus (Tasmanian blue gum)).